A 162-amino-acid chain; its full sequence is Cyclic pyranopterin monophosphate synthase (162 aa).

Substrate contacts are provided by residues 75–77 and 115–116; these read MCH and ME. The active site involves D130.

The protein belongs to the MoaC family. As to quaternary structure, homohexamer; trimer of dimers.

The catalysed reaction is (8S)-3',8-cyclo-7,8-dihydroguanosine 5'-triphosphate = cyclic pyranopterin phosphate + diphosphate. It functions in the pathway cofactor biosynthesis; molybdopterin biosynthesis. Its function is as follows. Catalyzes the conversion of (8S)-3',8-cyclo-7,8-dihydroguanosine 5'-triphosphate to cyclic pyranopterin monophosphate (cPMP). This is Cyclic pyranopterin monophosphate synthase from Geobacillus kaustophilus (strain HTA426).